The primary structure comprises 423 residues: Glutamate-1-semialdehyde 2,1-aminomutase (423 aa).

K262 carries the N6-(pyridoxal phosphate)lysine modification.

The protein belongs to the class-III pyridoxal-phosphate-dependent aminotransferase family. HemL subfamily. Homodimer. It depends on pyridoxal 5'-phosphate as a cofactor.

It localises to the cytoplasm. It catalyses the reaction (S)-4-amino-5-oxopentanoate = 5-aminolevulinate. It functions in the pathway porphyrin-containing compound metabolism; protoporphyrin-IX biosynthesis; 5-aminolevulinate from L-glutamyl-tRNA(Glu): step 2/2. The chain is Glutamate-1-semialdehyde 2,1-aminomutase from Saccharophagus degradans (strain 2-40 / ATCC 43961 / DSM 17024).